The following is a 597-amino-acid chain: MRTDYCGLIDKKYLGQTVTVKGWAHRRRDHGGVIFIDLRDREGLVQVVIDPDTPEAFKLADSSRGEYVLSITGIVRERPAGTANSKMISGEIEILAKEIEILNAAATPPFQIDDENLSENVRLTNRVIDLRRPAMQKNLRLRYKVAMGVRNHLDKQGFIDIETPMLTRSTPEGARDYLVPSRVHPGEFFALPQSPQLFKQLLMVAGFDRYYQITKCFRDEDLRADRQPEFTQIDIETSFLNEDEIMDITEGMTKEIFQDVLGVTLPTFPRMTYGDAMFYYGSDKPDMRVALKFTELTDVMKSEEFKVFRGAADMANGRVVALRVPNGASFSRKEIDDYTQFVAIYGAKGLAYIKVNDVTKLNEEGLQSPIVKFLSANGLKEIIARTGAQNGDIIFFGADKAKVVNEAIGALRIKIGHEHGLENGYFVKEWRPLWVVDFPMFEHDEEEDRWTACHHPFTSPKPGHEDLMATDPGKCLARAYDMVLNGWEIGGGSIRIHRADIQEKVFGALKISPEEQQNKFGFLLDNLKFGAPPHGGLAFGLDRLVTLMCGAESIRDVIAFPKTQRAQCLLTNAPNAVDDKQLRELNLRLRQKAEPSA.

E172 contributes to the L-aspartate binding site. Residues 196–199 (QLFK) form an aspartate region. R218 is an L-aspartate binding site. ATP-binding positions include 218 to 220 (RDE) and Q227. H454 provides a ligand contact to L-aspartate. E488 lines the ATP pocket. R495 is an L-aspartate binding site. Residue 540-543 (GLDR) participates in ATP binding.

The protein belongs to the class-II aminoacyl-tRNA synthetase family. Type 1 subfamily. In terms of assembly, homodimer.

The protein resides in the cytoplasm. The enzyme catalyses tRNA(Asx) + L-aspartate + ATP = L-aspartyl-tRNA(Asx) + AMP + diphosphate. Functionally, aspartyl-tRNA synthetase with relaxed tRNA specificity since it is able to aspartylate not only its cognate tRNA(Asp) but also tRNA(Asn). Reaction proceeds in two steps: L-aspartate is first activated by ATP to form Asp-AMP and then transferred to the acceptor end of tRNA(Asp/Asn). This is Aspartate--tRNA(Asp/Asn) ligase from Chromobacterium violaceum (strain ATCC 12472 / DSM 30191 / JCM 1249 / CCUG 213 / NBRC 12614 / NCIMB 9131 / NCTC 9757 / MK).